A 397-amino-acid chain; its full sequence is MTTLLNPYFGEFGGMYVPQILMPALRQLEEAFVSAQKDPEFQAQFNDLLKNYAGRPTALTKCQNITAGTNTTLYLKREDLLHGGAHKTNQVLGQALLAKRMGKTEIIAETGAGQHGVASALASALLGLKCRIYMGAKDVERQSPNVFRMRLMGAEVIPVHSGSATLKDACNEALRDWSGSYETAHYMLGTAAGPHPYPTIVCEFQRMIGEETKAQILEREGRLPDAVIACVGGGSNAIGMFADFINETNVGLIGVEPGGHGIETGEHGAPLKHGRVGIYFGMKAPMMQTEDGQIEESYSISAGLDFPSVGPQHAYLNSTGRADYVSITDDEALEAFKTLCLHEGIIPALESSHALAHALKMMRETPEKEQLLVVNLSGRGDKDIFTVHDILKARGEI.

Lys87 bears the N6-(pyridoxal phosphate)lysine mark.

Belongs to the TrpB family. In terms of assembly, tetramer of two alpha and two beta chains. The cofactor is pyridoxal 5'-phosphate.

It catalyses the reaction (1S,2R)-1-C-(indol-3-yl)glycerol 3-phosphate + L-serine = D-glyceraldehyde 3-phosphate + L-tryptophan + H2O. It functions in the pathway amino-acid biosynthesis; L-tryptophan biosynthesis; L-tryptophan from chorismate: step 5/5. Its function is as follows. The beta subunit is responsible for the synthesis of L-tryptophan from indole and L-serine. This chain is Tryptophan synthase beta chain, found in Shigella boydii serotype 18 (strain CDC 3083-94 / BS512).